The following is an 87-amino-acid chain: Small ribosomal subunit protein uS17 (87 aa).

Belongs to the universal ribosomal protein uS17 family. Part of the 30S ribosomal subunit.

In terms of biological role, one of the primary rRNA binding proteins, it binds specifically to the 5'-end of 16S ribosomal RNA. In Bacillus licheniformis (strain ATCC 14580 / DSM 13 / JCM 2505 / CCUG 7422 / NBRC 12200 / NCIMB 9375 / NCTC 10341 / NRRL NRS-1264 / Gibson 46), this protein is Small ribosomal subunit protein uS17.